The chain runs to 435 residues: MAAPLVLVLVVAVTVRAALFRSSLAEFISERVEVVSPLSSWKRVVEGLSLLDLGVSPYSGAVFHETPLIIYLFHFLIDYAELVFMITDALTAIALYFAIQDFNKVVFKKQKLLLELDQYAPDVAELIRTPMEMRYIPLKVALFYLLNPYTILSCVAKSTCAINNTLIAFFILTTIKGSAFLSAIFLALATYQSLYPLTLFVPGLLYLLQRQYIPVKMKSKAFWIFSWEYAMMYVGSLVVIICLSFFLLSSWDFIPAVYGFILSVPDLTPNIGLFWYFFAEMFEHFSLFFVCVFQINVFFYTIPLAIKLKEHPIFFMFIQIAVIAIFKSYPTVGDVALYMAFFPVWNHLYRFLRNIFVLTCIIIVCSLLFPVLWHLWIYAGSANSNFFYAITLTFNVGQILLISDYFYAFLRREYYLTHGLYLTAKDGTEAMLVLK.

The Cytoplasmic segment spans residues 2–3 (AA). A helical membrane pass occupies residues 4-22 (PLVLVLVVAVTVRAALFRS). The Lumenal portion of the chain corresponds to 23 to 78 (SLAEFISERVEVVSPLSSWKRVVEGLSLLDLGVSPYSGAVFHETPLIIYLFHFLID). Residues 79 to 99 (YAELVFMITDALTAIALYFAI) traverse the membrane as a helical segment. The Cytoplasmic segment spans residues 100–136 (QDFNKVVFKKQKLLLELDQYAPDVAELIRTPMEMRYI). Helical transmembrane passes span 137–158 (PLKV…VAKS), 159–178 (TCAI…IKGS), 179–194 (AFLS…YQSL), and 195–205 (YPLTLFVPGLL). The Cytoplasmic portion of the chain corresponds to 206–222 (YLLQRQYIPVKMKSKAF). 2 residues coordinate a cardiolipin: Lys216 and Met217. The helical transmembrane segment at 223-244 (WIFSWEYAMMYVGSLVVIICLS) threads the bilayer. At 245 to 286 (FFLLSSWDFIPAVYGFILSVPDLTPNIGLFWYFFAEMFEHFS) the chain is on the lumenal side. The helical transmembrane segment at 287–306 (LFFVCVFQINVFFYTIPLAI) threads the bilayer. Over 307 to 311 (KLKEH) the chain is Cytoplasmic. Lys309 contributes to the a cardiolipin binding site. A run of 2 helical transmembrane segments spans residues 312–331 (PIFF…SYPT) and 332–345 (VGDV…FPVW). Residues 346 to 354 (NHLYRFLRN) are Cytoplasmic-facing. Residues 355 to 372 (IFVLTCIIIVCSLLFPVL) traverse the membrane as a helical segment. Residues 373 to 384 (WHLWIYAGSANS) are Lumenal-facing. The a 2-acyl-6-[6-phosphoethanolamine-alpha-D-mannosyl-(1-&gt;2)-6-phosphoethanolamine-alpha-D-mannosyl-(1-&gt;6)-2-phosphoethanolamine-alpha-D-mannosyl-(1-&gt;4)-alpha-D-glucosaminyl]-1-(1-radyl,2-acyl-sn-glycero-3-phospho)-1D-myo-inositol site is built by Asn383 and Asn385. Residues 385-406 (NFFYAITLTFNVGQILLISDYF) form a helical membrane-spanning segment. The Cytoplasmic portion of the chain corresponds to 407-435 (YAFLRREYYLTHGLYLTAKDGTEAMLVLK).

It belongs to the PIGU family. In terms of assembly, heteropentamer. Part of the GPI-anchor transamidase complex, consisting of PIGK, PIGT, PIGS, PIGU and GAA1.

It localises to the endoplasmic reticulum membrane. Its pathway is glycolipid biosynthesis; glycosylphosphatidylinositol-anchor biosynthesis. Component of the glycosylphosphatidylinositol-anchor (GPI-anchor) transamidase (GPI-T) complex that catalyzes the formation of the linkage between a proprotein and a GPI-anchor and participates in GPI anchored protein biosynthesis. Binds the lipid portion of GPI-anchor. May act as an organizer in the transmembrane layer to recruit other subunits, and thus is essential for assembly of the complex. In Homo sapiens (Human), this protein is GPI-anchor transamidase component PIGU.